A 963-amino-acid polypeptide reads, in one-letter code: Protein suppressor of white apricot (963 aa).

The stretch at 234 to 276 (IIEKTARFIATQGAQMEILIKAKQANNTQFDFLTQGGHLQPYY) is one SURP motif 1 repeat. Disordered stretches follow at residues 290–322 (PAPQTPLDQQNTDKEAPSADDHSEEVAGGRRNP) and 360–430 (EDES…EPPQ). Basic and acidic residues predominate over residues 300–317 (NTDKEAPSADDHSEEVAG). Positions 364–375 (SNPGNSQHSGGT) are enriched in polar residues. A compositionally biased stretch (basic and acidic residues) spans 407 to 418 (THEEESSNREQQ). Ser-438, Ser-447, Ser-448, and Ser-450 each carry phosphoserine. The interval 445 to 470 (NYSSESEEEEDQVQPEKEEEKKPEPV) is disordered. Residues 458–468 (QPEKEEEKKPE) show a composition bias toward basic and acidic residues. An SURP motif 2 repeat occupies 483-523 (IIDKTATYVIKNGRQFEETLRTKSVDRFSFLLPANEYYPYY). Disordered regions lie at residues 593 to 613 (PQEASDEETSSNAAGVEHVRP), 634 to 662 (TAGQKGNITASPSCSSPQKEQRQAEERVK), and 716 to 963 (PPES…SSSP). Over residues 637–651 (QKGNITASPSCSSPQ) the composition is skewed to polar residues. Ser-649 is modified (phosphoserine). A compositionally biased stretch (basic and acidic residues) spans 652–662 (KEQRQAEERVK). Low complexity predominate over residues 718–727 (ESAAGAATAD). Residues 768-778 (DEEDDDEEDGG) show a composition bias toward acidic residues. Polar residues predominate over residues 787–796 (NDDSTNTFTS). The span at 799–809 (VLPPTAAPPPA) shows a compositional bias: pro residues. The span at 820–830 (QLVATTSTRSS) shows a compositional bias: low complexity. Basic residues predominate over residues 831–847 (SSRHLKTHRRSRSRSKN). Residues 848 to 858 (VRSSDSSPSSR) show a composition bias toward low complexity. Basic residues-rich tracts occupy residues 861–870 (SRRRRQKSSR) and 882–913 (KSQHSSTQRKKTPKKRRRSKSRSRSKSIRRSR). Phosphoserine occurs at positions 912, 914, and 916. Residues 934 to 944 (AEQRRQQDRRR) are compositionally biased toward basic and acidic residues. Residues 945-963 (TPTKKSHKRHKRRRRSSSP) are compositionally biased toward basic residues.

It is found in the nucleus speckle. Regulator of pre-mRNA splicing (and, possibly, of other RNA processing events). Regulates its own expression at the level of RNA processing. This Drosophila melanogaster (Fruit fly) protein is Protein suppressor of white apricot (su(w[a])).